A 926-amino-acid polypeptide reads, in one-letter code: MSYTLDSLGNPSAYRRVTETRSSFSRISGSPSSGFRSQSWSRGSPSTVSSSYKRSALAPRLTYSSAMLSSAESSLDFSQSSSLLDGGSGPGGDYKLSRSNEKEQIQGLNDRFAGYIEKVHYLEQQNKEIEAEIQALRQKQASHAQLGDAYDQEIRELRATLEMVNHEKAQVQLDSDHLEEDIHRLKERFEEEARLRDDTEAAIRALRKDIEESSLVKVELDKKVQSLQDEVAFLRSNHEEEVADLLAQIQASHITVERKDYLKTDISTALKEIRSQLESHSDQNMHQAEEWFKCRYAKLTEAAEQNKEAIRSAKEEIAEYRRQLQSKSIELESVRGTKESLERQLSDIEERHNHDLSSYQDTIQQLENELRGTKWEMARHLREYQDLLNVKMALDIEIAAYRKLLEGEETRFSTFAGSITGPLYTHRQPSIAISSKIQKTKVEAPKLKVQHKFVEEIIEETKVEDEKSEMEEALTAITEELAVSVKEEVKEEEAEEKEEKEEAEEEVVAAKKSPVKATAPELKEEEGEKEEEEGQEEEEEEEEAAKSDQAEEGGSEKEGSSEKEEGEQEEEGETEAEGEGEEAAAEAKEEKKMEEKAEEVAPKEELAAEAKVEKPEKAKSPVAKSPTTKSPTAKSPEAKSPEAKSPTAKSPTAKSPVAKSPTAKSPEAKSPEAKSPTAKSPTAKSPAAKSPAPKSPVEEVKPKAEAGAEKGEQKEKVEEEKKEAKESPKEEKAEKKEEKPKDVPEKKKAESPVKAESPVKEEVPAKPVKVSPEKEAKEEEKPQEKEKEKEKVEEVGGKEEGGLKESRKEDIAINGEVEGKEEEQETKEKGSGGEEEKGVVTNGLDVSPGDEKKGGDKSEEKVVVTKMVEKITSEGGDGATKYITKSVTVTQKVEEHEETFEEKLVSTKKVEKVTSHAIVKEVTQSD.

Polar residues predominate over residues 1-10; that stretch reads MSYTLDSLGN. Disordered regions lie at residues 1-51 and 79-102; these read MSYT…VSSS and QSSSLLDGGSGPGGDYKLSRSNEK. The residue at position 2 (serine 2) is an N-acetylserine. A head region spans residues 2-104; sequence SYTLDSLGNP…KLSRSNEKEQ (103 aa). Residues 21–44 are compositionally biased toward low complexity; that stretch reads RSSFSRISGSPSSGFRSQSWSRGS. Phosphoserine is present on serine 30. Residue arginine 42 is modified to Omega-N-methylarginine. Threonine 47 carries an O-linked (GlcNAc) threonine glycan. Residue serine 99 is modified to Phosphoserine. The IF rod domain maps to 101 to 412; it reads EKEQIQGLND…KLLEGEETRF (312 aa). The coil 1A stretch occupies residues 105-136; sequence IQGLNDRFAGYIEKVHYLEQQNKEIEAEIQAL. The interval 137 to 149 is linker 1; it reads RQKQASHAQLGDA. The interval 150 to 248 is coil 1B; that stretch reads YDQEIRELRA…EEEVADLLAQ (99 aa). A Phosphoserine modification is found at serine 226. The linker 12 stretch occupies residues 249-265; the sequence is IQASHITVERKDYLKTD. The interval 266-287 is coil 2A; it reads ISTALKEIRSQLESHSDQNMHQ. The segment at 288–291 is linker 2; sequence AEEW. The segment at 292-412 is coil 2B; it reads FKCRYAKLTE…KLLEGEETRF (121 aa). At tyrosine 320 the chain carries Phosphotyrosine. Residues serine 346, serine 418, serine 430, serine 468, and serine 484 each carry the phosphoserine modification. Residues 413–926 form a tail region; the sequence is STFAGSITGP…AIVKEVTQSD (514 aa). Residues 487–860 form a disordered region; the sequence is EEVKEEEAEE…EKKGGDKSEE (374 aa). Acidic residues predominate over residues 490-507; the sequence is KEEEAEEKEEKEEAEEEV. Residues 512-516 form repeat 1; that stretch reads KSPVK. The tract at residues 512–698 is 17 X 5 AA approximate tandem repeats of K-S-P-[TVEA]-[AKETP]; it reads KSPVKATAPE…KSPAPKSPVE (187 aa). Serine 513 bears the Phosphoserine mark. The span at 523-543 shows a compositional bias: acidic residues; sequence KEEEGEKEEEEGQEEEEEEEE. Basic and acidic residues predominate over residues 544-563; it reads AAKSDQAEEGGSEKEGSSEK. 4 positions are modified to phosphoserine: serine 547, serine 555, serine 560, and serine 561. A compositionally biased stretch (acidic residues) spans 564 to 584; that stretch reads EEGEQEEEGETEAEGEGEEAA. Position 574 is a phosphothreonine (threonine 574). A compositionally biased stretch (basic and acidic residues) spans 585–619; that stretch reads AEAKEEKKMEEKAEEVAPKEELAAEAKVEKPEKAK. Repeat copies occupy residues 619 to 623, 624 to 628, 629 to 633, 634 to 638, 639 to 643, 644 to 648, 649 to 653, 654 to 658, 659 to 663, 664 to 668, 669 to 673, 674 to 678, 679 to 683, 684 to 688, 689 to 693, and 694 to 698. Phosphothreonine is present on threonine 628. 3 positions are modified to phosphoserine: serine 630, serine 635, and serine 640. Residue threonine 647 is modified to Phosphothreonine. A phosphoserine mark is found at serine 650 and serine 655. Phosphoserine is present on residues serine 665 and serine 670. Low complexity predominate over residues 673–692; that stretch reads AKSPTAKSPTAKSPAAKSPA. Threonine 677 carries the post-translational modification Phosphothreonine. 10 positions are modified to phosphoserine: serine 680, serine 685, serine 690, serine 695, serine 727, serine 751, serine 757, serine 771, serine 831, and serine 847. Composition is skewed to basic and acidic residues over residues 696 to 764, 771 to 811, and 826 to 838; these read PVEE…EEVP, SPEK…KEDI, and TKEKGSGGEEEKG. A compositionally biased stretch (basic and acidic residues) spans 849–860; that stretch reads GDEKKGGDKSEE.

Forms heterodimers with NEFL; which can further hetero-oligomerize (in vitro). Forms heterodimers with INA (in vitro). In terms of processing, phosphorylated on a number of serine residues in the repeated K-S-P tripeptide motif. Phosphorylation of NFH may result in the formation of interfilament cross-links that are important in the maintenance of axonal caliber. Phosphorylation seems to play a major role in the functioning of the larger neurofilament polypeptides (NF-M and NF-H), the levels of phosphorylation being altered developmentally and coincidentally with a change in the neurofilament function. Post-translationally, phosphorylated in the head and rod regions by the PKC kinase PKN1, leading to the inhibition of polymerization.

It is found in the cytoplasm. It localises to the cytoskeleton. The protein resides in the cell projection. Its subcellular location is the axon. Functionally, neurofilaments usually contain three intermediate filament proteins: NEFL, NEFM, and NEFH which are involved in the maintenance of neuronal caliber. May additionally cooperate with the neuronal intermediate filament proteins PRPH and INA to form neuronal filamentous networks. In Bos taurus (Bovine), this protein is Neurofilament medium polypeptide (NEFM).